The chain runs to 275 residues: Small ribosomal subunit protein uS3 (275 aa).

The KH type-2 domain occupies 39–107 (VRIYLKKKLK…PVHVNIEEIR (69 aa)). The disordered stretch occupies residues 216–275 (AAATSAEPAAEEKKTRRAPSKTAARKPAAGTDKPLVAAKPAVKRVRKVETPAADTQKSGE).

The protein belongs to the universal ribosomal protein uS3 family. Part of the 30S ribosomal subunit. Forms a tight complex with proteins S10 and S14.

Functionally, binds the lower part of the 30S subunit head. Binds mRNA in the 70S ribosome, positioning it for translation. This Polynucleobacter asymbioticus (strain DSM 18221 / CIP 109841 / QLW-P1DMWA-1) (Polynucleobacter necessarius subsp. asymbioticus) protein is Small ribosomal subunit protein uS3.